The chain runs to 289 residues: Mitochondrial fission regulator 1-like (289 aa).

T27 carries the phosphothreonine modification. S38 bears the Phosphoserine mark. The residue at position 100 (S100) is a Phosphoserine; by AMPK. S107, S221, and S222 each carry phosphoserine. Residue S235 is modified to Phosphoserine; by AMPK. Phosphoserine is present on residues S258 and S270.

It belongs to the MTFR1 family. Phosphorylated by AMPK. Upon stress, phosphorylation at Ser-100 and Ser-235 by AMPK is sufficient to induce mitochondrial fragmentation.

The protein resides in the mitochondrion outer membrane. Mitochondrial protein required for adaptation of miochondrial dynamics to metabolic changes. Regulates mitochondrial morphology at steady state and mediates AMPK-dependent stress-induced mitochondrial fragmentation via the control of OPA1 levels. This is Mitochondrial fission regulator 1-like (Mtfr1l) from Mus musculus (Mouse).